The following is a 349-amino-acid chain: Xylitol-binding protein (349 aa).

The first 22 residues, 1-22 (MNITSKIGAIAAAGAVGLGLTA), serve as a signal peptide directing secretion. C23 carries the N-palmitoyl cysteine lipid modification. C23 is lipidated: S-diacylglycerol cysteine. Xylitol-binding residues include Y42, N121, R173, N224, D249, and Q269.

It belongs to the bacterial solute-binding protein 2 family.

It is found in the cell membrane. In terms of biological role, part of an ABC transporter complex likely involved in xylitol import. Binds xylitol. This Mycolicibacterium smegmatis (strain ATCC 700084 / mc(2)155) (Mycobacterium smegmatis) protein is Xylitol-binding protein.